A 146-amino-acid polypeptide reads, in one-letter code: MDERIIAKLVETFSLSQLLEIYDSQSCISFDNHHVLSQQESSVQVDDNFQIEPILKKYNIRPYPNLTNIPDSLHKIHILQEYCYYLRDDMLDSLQHMINVDDADFVAKYGSKSMEYQYHQIRKYMLEEILENVKHELNFLNSKCII.

This is an uncharacterized protein from Acanthamoeba polyphaga mimivirus (APMV).